Consider the following 371-residue polypeptide: MNNWKRIVVKVGTSSITDGRGSPSGEKILSLVKECVKLIRADKELVLVSSGAIASGREIIQKLSKRKDLPAKQALSAVGQVRLMQYYSQLFSIFKQPIAQILLTAEDLRDRKRYINISQTFETLLEEKIIPIVNENDTVAVEEIKIGDNDTLSAKVACAINADLLVILSDVEGLYSEDPNISSNALLITDVYEIDESIEKIAGPGKGTGGMFTKVQAAKIVTEAGIPMILARADVENILERIVLKKEKVGTFFYPSEKHLNKRKHWMLFMAKPEGRIYIDDGAKDALLKRGKSLLPVGIKKVEGEFTRGDTVSIFDLRGEEIARGITNYDSLELDKIKGKNTEEIRNILGEDFYEEVIHRNNLVLTNRGDL.

Lys10 contacts ATP. Substrate contacts are provided by Ser50, Asp137, and Asn149. ATP contacts are provided by residues 169 to 170 (SD) and 208 to 214 (TGGMFTK). Residues 274 to 352 (EGRIYIDDGA…EEIRNILGED (79 aa)) enclose the PUA domain.

It belongs to the glutamate 5-kinase family.

It is found in the cytoplasm. The catalysed reaction is L-glutamate + ATP = L-glutamyl 5-phosphate + ADP. It participates in amino-acid biosynthesis; L-proline biosynthesis; L-glutamate 5-semialdehyde from L-glutamate: step 1/2. Its function is as follows. Catalyzes the transfer of a phosphate group to glutamate to form L-glutamate 5-phosphate. The chain is Glutamate 5-kinase from Dictyoglomus turgidum (strain DSM 6724 / Z-1310).